We begin with the raw amino-acid sequence, 174 residues long: MNYFELFKFSPAFDIDTALLAERYRELQRAVHPDKFANDTEQQKLLSVQRTAQVNDGFQTLKDPIRRAEHMLSLRGIELSHETTTVKDTGFLMQQMEWREALEDIRDSADPQASIDELYQSFAQYRAQLTQQLTQLLTSEQAEDALLAADQVRKLKFMAKLHDELTRVEDALLD.

A J domain is found at 2 to 74 (NYFELFKFSP…IRRAEHMLSL (73 aa)).

This sequence belongs to the HscB family. Interacts with HscA and stimulates its ATPase activity.

Functionally, co-chaperone involved in the maturation of iron-sulfur cluster-containing proteins. Seems to help targeting proteins to be folded toward HscA. In Shewanella baltica (strain OS185), this protein is Co-chaperone protein HscB homolog.